A 338-amino-acid chain; its full sequence is ABC transporter I family member 6, chloroplastic (338 aa).

The transit peptide at 1–66 (MAGVNLQLRH…RTTRRSVIVS (66 aa)) directs the protein to the chloroplast. One can recognise an ABC transporter domain in the interval 92 to 338 (LEVRDLRAVI…EKEGYKAISG (247 aa)). ATP is bound at residue 126–133 (GKNGSGKS).

Belongs to the ABC transporter superfamily. ABCI family. Interacts with NAP6. In terms of tissue distribution, present in all organs, with higher levels in aerial parts.

The protein localises to the plastid. It is found in the chloroplast. In terms of biological role, essential protein. Required during embryo development, especially at early stages. Involved in chloroplast differentiation. In Arabidopsis thaliana (Mouse-ear cress), this protein is ABC transporter I family member 6, chloroplastic (ABCI6).